An 860-amino-acid polypeptide reads, in one-letter code: DNA mismatch repair protein MutS (860 aa).

Residue 621 to 628 (GPNMGGKS) participates in ATP binding.

The protein belongs to the DNA mismatch repair MutS family.

Its function is as follows. This protein is involved in the repair of mismatches in DNA. It is possible that it carries out the mismatch recognition step. This protein has a weak ATPase activity. This chain is DNA mismatch repair protein MutS, found in Salmonella arizonae (strain ATCC BAA-731 / CDC346-86 / RSK2980).